The chain runs to 293 residues: Nitrogenase iron protein (293 aa).

10–17 is a binding site for ATP; the sequence is GKGGIGKS. Cys98 contributes to the [4Fe-4S] cluster binding site. Arg101 bears the ADP-ribosylarginine; by dinitrogenase reductase ADP-ribosyltransferase mark. Cys133 contacts [4Fe-4S] cluster.

It belongs to the NifH/BchL/ChlL family. Homodimer. Requires [4Fe-4S] cluster as cofactor. In terms of processing, the reversible ADP-ribosylation of Arg-101 inactivates the nitrogenase reductase and regulates nitrogenase activity.

It carries out the reaction N2 + 8 reduced [2Fe-2S]-[ferredoxin] + 16 ATP + 16 H2O = H2 + 8 oxidized [2Fe-2S]-[ferredoxin] + 2 NH4(+) + 16 ADP + 16 phosphate + 6 H(+). In terms of biological role, the key enzymatic reactions in nitrogen fixation are catalyzed by the nitrogenase complex, which has 2 components: the iron protein and the molybdenum-iron protein. The polypeptide is Nitrogenase iron protein (Klebsiella pneumoniae (strain 342)).